The primary structure comprises 446 residues: C-type lectin domain family 18 member A (446 aa).

A signal peptide spans M1–A26. Residues L52–Y182 form the SCP domain. An N-linked (GlcNAc...) asparagine glycan is attached at N144. Residues P228–Q261 enclose the EGF-like domain. 4 disulfide bridges follow: C236-C249, C251-C260, C327-C432, and C408-C424. Residues I306–Q433 enclose the C-type lectin domain.

Post-translationally, N-glycosylated. Dectected in all cell lines tested and in peripheral blood cells.

The protein resides in the secreted. It is found in the endoplasmic reticulum. The protein localises to the golgi apparatus. Its subcellular location is the endosome. In terms of biological role, binds polysaccharides in a Ca(2+)-independent manner with a preferentially binding to fucoidan, beta-glucans and galactans. The chain is C-type lectin domain family 18 member A (CLEC18A) from Homo sapiens (Human).